The following is a 62-amino-acid chain: Small ribosomal subunit protein eS30z/eS30y/eS30x (62 aa).

The disordered stretch occupies residues 1-38 (MGKVHGSLARAGKVRGQTPKVAKQDKKKKPRGRAHKRL). Positions 25–38 (DKKKKPRGRAHKRL) are enriched in basic residues.

It belongs to the eukaryotic ribosomal protein eS30 family.

This is Small ribosomal subunit protein eS30z/eS30y/eS30x (RPS30A) from Arabidopsis thaliana (Mouse-ear cress).